Here is a 171-residue protein sequence, read N- to C-terminus: Translationally-controlled tumor protein homolog (171 aa).

Residues 1–171 (MIIYKDIITG…FKDGLEIEKC (171 aa)) enclose the TCTP domain.

It belongs to the TCTP family.

It localises to the cytoplasm. Functionally, involved in calcium binding and microtubule stabilization. The chain is Translationally-controlled tumor protein homolog (tpt1) from Labeo rohita (Indian major carp).